Reading from the N-terminus, the 333-residue chain is Protein XAP5 CIRCADIAN TIMEKEEPER (333 aa).

Coiled-coil stretches lie at residues 12 to 43 and 70 to 116; these read AQDAVKIRRLEKQREAERRKIEELKNKSSDGQ and TREQ…VRGD. Residues 89-98 are compositionally biased toward basic and acidic residues; it reads EKEKLQKLQQ. Residues 89–171 form a disordered region; the sequence is EKEKLQKLQQ…REREAEEQAE (83 aa). Over residues 123–136 the composition is skewed to acidic residues; sequence DEIENGSDEDEFEN. The segment covering 160–171 has biased composition (basic and acidic residues); the sequence is PDREREAEEQAE.

The protein belongs to the FAM50 family.

It localises to the nucleus. Functionally, involved in light regulation of the circadian clock and photomorphogenesis. This Oryza sativa subsp. indica (Rice) protein is Protein XAP5 CIRCADIAN TIMEKEEPER (XCT).